A 583-amino-acid chain; its full sequence is Dynein axonemal assembly factor 3 (583 aa).

The segment at 455–534 (RGGGDSAVES…RADQIPPLEA (80 aa)) is disordered.

The protein belongs to the DNAAF3 family.

The protein resides in the cytoplasm. It is found in the dynein axonemal particle. Functionally, required for the assembly of axonemal inner and outer dynein arms. Involved in preassembly of dyneins into complexes before their transport into cilia. The sequence is that of Dynein axonemal assembly factor 3 (Dnaaf3) from Rattus norvegicus (Rat).